The chain runs to 298 residues: ATP synthase gamma chain (298 aa).

Belongs to the ATPase gamma chain family. In terms of assembly, F-type ATPases have 2 components, CF(1) - the catalytic core - and CF(0) - the membrane proton channel. CF(1) has five subunits: alpha(3), beta(3), gamma(1), delta(1), epsilon(1). CF(0) has three main subunits: a, b and c.

The protein resides in the cell inner membrane. Its function is as follows. Produces ATP from ADP in the presence of a proton gradient across the membrane. The gamma chain is believed to be important in regulating ATPase activity and the flow of protons through the CF(0) complex. The chain is ATP synthase gamma chain from Desulfosudis oleivorans (strain DSM 6200 / JCM 39069 / Hxd3) (Desulfococcus oleovorans).